The primary structure comprises 67 residues: Conotoxin Pu5.1 (67 aa).

The first 22 residues, 1 to 22 (MRCVPVFVILLLLIASTPSVDA), serve as a signal peptide directing secretion. Residues 23 to 51 (RPNPKDDVPLASFHEDANGILQMLWKKGR) constitute a propeptide that is removed on maturation. At tryptophan 63 the chain carries Tryptophan amide.

The protein belongs to the conotoxin T superfamily. Post-translationally, contains 2 disulfide bonds that can be either 'C1-C3, C2-C4' or 'C1-C4, C2-C3', since these disulfide connectivities have been observed for conotoxins with cysteine framework V (for examples, see AC P0DQQ7 and AC P81755). In terms of tissue distribution, expressed by the venom duct.

It is found in the secreted. The protein is Conotoxin Pu5.1 of Conus pulicarius (Flea-bitten cone).